We begin with the raw amino-acid sequence, 421 residues long: MDNIPQSINPIPAFYCCYLLRSTVRHASLYIGSTPEPSRRLAQHNGDRTGGARKTSSEKLRPWEMVAIVSGFTNRAGALQFEWAWQHTKESRHAEVERCESEQLGTRGSSRTGKEVKRAGKPRTSLPNILENLHILLRSPYFSEWPLEVWFFSADVWQVWSQPKGNLLDNSIKVVTAFSSKEAGDTNRREILGKRIETLDTGYDALIEYVEKSQFLLESEEAIDCGVCKQRLNPRNDMIAICSHSLCRCASHLLCLSAHFLEAAGFIGKLIPKEGTCPACLGKLEWPTLMKEITLRLRGQEEVKRLLGRRRRTEQVGKRKISNHVSSEKGESEASMPSTDAKTMALPIRSHPSVGGSNFGKLGRSVGSAIRTNTDNGSVKAVTPEIEFYRRRKCNAKKNFSGLYSTPRINISDWDNAEIIE.

A GIY-YIG domain is found at alanine 13–glutamate 95. Disordered regions lie at residues threonine 34–serine 57 and valine 96–glycine 120. The SLX1-type zinc finger occupies cysteine 225–cysteine 280. Residues arginine 310–serine 322 show a composition bias toward basic residues. Positions arginine 310 to threonine 339 are disordered.

It belongs to the SLX1 family. As to quaternary structure, forms a heterodimer with SLX4. It depends on a divalent metal cation as a cofactor.

It localises to the nucleus. Its function is as follows. Catalytic subunit of the SLX1-SLX4 structure-specific endonuclease that resolves DNA secondary structures generated during DNA repair and recombination. Has endonuclease activity towards branched DNA substrates, introducing single-strand cuts in duplex DNA close to junctions with ss-DNA. In Ajellomyces capsulatus (strain G186AR / H82 / ATCC MYA-2454 / RMSCC 2432) (Darling's disease fungus), this protein is Structure-specific endonuclease subunit SLX1.